The following is a 318-amino-acid chain: D-alanine--D-alanine ligase (318 aa).

An ATP-grasp domain is found at 117 to 315 (KQVWLSLGLS…FETLVWRVLE (199 aa)). 146–201 (ARQIGLPIIVKPANEGSSVGVSRVFDQAQLEEAVTLAARYDGALLMEQLIEGDELT) contributes to the ATP binding site. Residues D268, E282, and N284 each coordinate Mg(2+).

Belongs to the D-alanine--D-alanine ligase family. It depends on Mg(2+) as a cofactor. The cofactor is Mn(2+).

The protein resides in the cytoplasm. The enzyme catalyses 2 D-alanine + ATP = D-alanyl-D-alanine + ADP + phosphate + H(+). Its pathway is cell wall biogenesis; peptidoglycan biosynthesis. Its function is as follows. Cell wall formation. This Xanthomonas axonopodis pv. citri (strain 306) protein is D-alanine--D-alanine ligase.